The chain runs to 152 residues: Ubiquitin-activating enzyme E1 Y (152 aa).

The active-site Glycyl thioester intermediate is the Cys51.

This sequence belongs to the ubiquitin-activating E1 family. In terms of assembly, monomer.

The enzyme catalyses ATP + ubiquitin + [E1 ubiquitin-activating enzyme]-L-cysteine = AMP + diphosphate + S-ubiquitinyl-[E1 ubiquitin-activating enzyme]-L-cysteine.. It participates in protein modification; protein ubiquitination. Its function is as follows. Activates ubiquitin by first adenylating its C-terminal glycine residue with ATP, and thereafter linking this residue to the side chain of a cysteine residue in E1, yielding a ubiquitin-E1 thioester and free AMP. The Y chromosome form could be involved in the survival and proliferation of differentiating spermatogonia. The protein is Ubiquitin-activating enzyme E1 Y (UBE1Y) of Osphranter rufus (Red kangaroo).